Reading from the N-terminus, the 308-residue chain is uncharacterized protein (308 aa).

This is an uncharacterized protein from Escherichia coli (Bacteriophage T4).